The chain runs to 359 residues: GDSL esterase/lipase At5g03610 (359 aa).

An N-terminal signal peptide occupies residues 1–22 (MDSLIKLFFCLFIFLCTSLLFG). The active-site Nucleophile is Ser50. N-linked (GlcNAc...) asparagine glycans are attached at residues Asn136, Asn236, and Asn259. Residues Asp332 and His335 contribute to the active site.

It belongs to the 'GDSL' lipolytic enzyme family.

It is found in the secreted. This chain is GDSL esterase/lipase At5g03610, found in Arabidopsis thaliana (Mouse-ear cress).